A 50-amino-acid chain; its full sequence is Large ribosomal subunit protein bL33B (50 aa).

The protein belongs to the bacterial ribosomal protein bL33 family.

The protein is Large ribosomal subunit protein bL33B of Metamycoplasma arthritidis (strain 158L3-1) (Mycoplasma arthritidis).